A 766-amino-acid polypeptide reads, in one-letter code: Phospholipid phosphatase-related protein type 4 (766 aa).

Ser37 carries the phosphoserine modification. A run of 3 helical transmembrane segments spans residues 68–88 (LPCF…SLYF), 120–140 (AIPF…TIMV), and 179–199 (FVGV…IIQL). N-linked (GlcNAc...) asparagine glycosylation is found at Asn215 and Asn220. A helical transmembrane segment spans residues 248–268 (SFPSQHATLAAFAAVYVSMYF). Asn269 carries an N-linked (GlcNAc...) asparagine glycan. Helical transmembrane passes span 277 to 297 (KLLK…CGLT) and 309 to 329 (VYCG…YAVG). Residue Ser347 is modified to Phosphoserine. The N-linked (GlcNAc...) asparagine glycan is linked to Asn363. At Ser386 the chain carries Phosphoserine. Asn433 carries N-linked (GlcNAc...) asparagine glycosylation. Residue Ser439 is modified to Phosphoserine. The interval 454 to 494 (SKNESRKMSLQVMDTEPEGQSPPRSIEMRSSSEPSRVGVNG) is disordered. Asn456 carries an N-linked (GlcNAc...) asparagine glycan. Residues Ser462 and Ser474 each carry the phosphoserine modification. Residues Asn515, Asn545, and Asn570 are each glycosylated (N-linked (GlcNAc...) asparagine). A Phosphoserine modification is found at Ser608. Disordered stretches follow at residues 634–654 (PIIQ…KWKA), 672–701 (DSES…HHHH), and 742–766 (ERSN…AYKD). Residues 672–697 (DSESCESLKDSFGSGDRKRSNIDSNE) are compositionally biased toward basic and acidic residues. Residues 743-752 (RSNSPENTRN) show a composition bias toward polar residues.

It belongs to the PA-phosphatase related phosphoesterase family. In terms of processing, O-glycosylated. Probably at Ser-347. In terms of tissue distribution, brain-specific, it is exclusively expressed in neurons (at protein level).

It is found in the postsynaptic density membrane. Functionally, postsynaptic density membrane protein that indirectly regulates glutamatergic synaptic transmission through lysophosphatidic acid (LPA)-mediated signaling pathways. Binds lysophosphatidic acid (LPA) and mediates its internalization into cells. Could act as receptor or a transporter of this lipid at the post-synaptic membrane. Modulates lysophosphatidic acid (LPA) activity in neuron axonal outgrowth during development by attenuating phospholipid-induced axon collapse. In Mus musculus (Mouse), this protein is Phospholipid phosphatase-related protein type 4.